Here is a 118-residue protein sequence, read N- to C-terminus: MAAALARLGLRPVKLVRVQFCPFEKNVESTRTFLQTVSSEKVRATNLNCSVIADVRHDGSEPCVDVLFGDGYRLIMRGAHLTTQEMLSALASHIRDRNAAAASAPGADKVAPGTSTRR.

Positions 99–118 are disordered; it reads AAAASAPGADKVAPGTSTRR.

Belongs to the mitochondrion-specific ribosomal protein mL53 family. In terms of assembly, component of the mitochondrial ribosome large subunit (39S) which comprises a 16S rRNA and about 50 distinct proteins.

The protein resides in the mitochondrion. This is Large ribosomal subunit protein mL53 (Mrpl53) from Mus musculus (Mouse).